The primary structure comprises 915 residues: Probable serine/threonine-protein kinase dyrk2 (915 aa).

Low complexity-rich tracts occupy residues 51–79 (TSNT…PTIS), 108–119 (SSSKSSSNSSSI), 170–185 (SSSS…STTS), and 196–218 (SSNS…SGSS). Disordered regions lie at residues 51–119 (TSNT…SSSI), 132–334 (FSSS…SKSS), and 349–533 (AIKS…PTKS). Polar residues predominate over residues 234 to 260 (PSHTISDSPRSSTMKSRSVSISNGSLF). Low complexity-rich tracts occupy residues 261–287 (SPTN…SSIS), 300–333 (SSST…PSKS), 352–364 (SRSL…LARV), 379–391 (SSSS…SFSS), 399–425 (SSSK…ASKI), and 433–533 (SLSS…PTKS). Residues 605 to 902 (FEIVSILGQG…AEQGLKHDWI (298 aa)) form the Protein kinase domain. ATP-binding positions include 611–619 (LGQGSFCQV) and lysine 634. The active-site Proton acceptor is the aspartate 731.

Belongs to the protein kinase superfamily. CMGC Ser/Thr protein kinase family. MNB/DYRK subfamily.

The catalysed reaction is L-seryl-[protein] + ATP = O-phospho-L-seryl-[protein] + ADP + H(+). It carries out the reaction L-threonyl-[protein] + ATP = O-phospho-L-threonyl-[protein] + ADP + H(+). The enzyme catalyses L-tyrosyl-[protein] + ATP = O-phospho-L-tyrosyl-[protein] + ADP + H(+). The sequence is that of Probable serine/threonine-protein kinase dyrk2 (dyrk2) from Dictyostelium discoideum (Social amoeba).